The sequence spans 287 residues: MAAITAALVKELRERTGEGMMDCKKALEKAGGDIEKAIDDMRASGAIKAAKKAGNVAAEGAIAVKTDGKSAVLLEVNSQTDFLALQDDFKNFVAESLEEAFAQKLTDAAPLIASREAAREALVAKCGENVNIRRLVRVEGDVVGAYLHGNKIGAVVVLKGGDVELAKNIAMHVAASNPEFLDSSEISAEAIEREKGVFLQLNADKIAGKPENIVENMINGRITKFKAEASLKEQAFVMNPEVKVGELAKKAGAEIVSFTYFKVGEGIEKPVDDFAAEVAAQVAAAKQ.

The interval 80–83 is involved in Mg(2+) ion dislocation from EF-Tu; it reads TDFL.

Belongs to the EF-Ts family.

It localises to the cytoplasm. Its function is as follows. Associates with the EF-Tu.GDP complex and induces the exchange of GDP to GTP. It remains bound to the aminoacyl-tRNA.EF-Tu.GTP complex up to the GTP hydrolysis stage on the ribosome. This chain is Elongation factor Ts, found in Pseudomonas putida (strain GB-1).